The sequence spans 103 residues: V-type ATP synthase subunit F (103 aa).

Belongs to the V-ATPase F subunit family.

In terms of biological role, produces ATP from ADP in the presence of a proton gradient across the membrane. The polypeptide is V-type ATP synthase subunit F (Clostridium botulinum (strain Alaska E43 / Type E3)).